Here is a 309-residue protein sequence, read N- to C-terminus: 4-hydroxy-3-methylbut-2-enyl diphosphate reductase (309 aa).

Cys13 contacts [4Fe-4S] cluster. Residues His42 and His75 each coordinate (2E)-4-hydroxy-3-methylbut-2-enyl diphosphate. Positions 42 and 75 each coordinate dimethylallyl diphosphate. Isopentenyl diphosphate is bound by residues His42 and His75. Cys97 lines the [4Fe-4S] cluster pocket. His125 contributes to the (2E)-4-hydroxy-3-methylbut-2-enyl diphosphate binding site. His125 provides a ligand contact to dimethylallyl diphosphate. His125 lines the isopentenyl diphosphate pocket. Glu127 functions as the Proton donor in the catalytic mechanism. Position 165 (Thr165) interacts with (2E)-4-hydroxy-3-methylbut-2-enyl diphosphate. A [4Fe-4S] cluster-binding site is contributed by Cys195. Positions 223, 224, 225, and 267 each coordinate (2E)-4-hydroxy-3-methylbut-2-enyl diphosphate. Positions 223, 224, 225, and 267 each coordinate dimethylallyl diphosphate. Residues Ser223, Ser224, Asn225, and Ser267 each coordinate isopentenyl diphosphate.

It belongs to the IspH family. Requires [4Fe-4S] cluster as cofactor.

It carries out the reaction isopentenyl diphosphate + 2 oxidized [2Fe-2S]-[ferredoxin] + H2O = (2E)-4-hydroxy-3-methylbut-2-enyl diphosphate + 2 reduced [2Fe-2S]-[ferredoxin] + 2 H(+). The catalysed reaction is dimethylallyl diphosphate + 2 oxidized [2Fe-2S]-[ferredoxin] + H2O = (2E)-4-hydroxy-3-methylbut-2-enyl diphosphate + 2 reduced [2Fe-2S]-[ferredoxin] + 2 H(+). The protein operates within isoprenoid biosynthesis; dimethylallyl diphosphate biosynthesis; dimethylallyl diphosphate from (2E)-4-hydroxy-3-methylbutenyl diphosphate: step 1/1. It functions in the pathway isoprenoid biosynthesis; isopentenyl diphosphate biosynthesis via DXP pathway; isopentenyl diphosphate from 1-deoxy-D-xylulose 5-phosphate: step 6/6. Its function is as follows. Catalyzes the conversion of 1-hydroxy-2-methyl-2-(E)-butenyl 4-diphosphate (HMBPP) into a mixture of isopentenyl diphosphate (IPP) and dimethylallyl diphosphate (DMAPP). Acts in the terminal step of the DOXP/MEP pathway for isoprenoid precursor biosynthesis. This is 4-hydroxy-3-methylbut-2-enyl diphosphate reductase from Chlamydia felis (strain Fe/C-56) (Chlamydophila felis).